The following is a 444-amino-acid chain: N-succinylarginine dihydrolase (444 aa).

Residues 19–28, Asn110, and 137–138 contribute to the substrate site; these read AGLSFGNVAS and HR. Residue Glu174 is part of the active site. Position 214 (Arg214) interacts with substrate. The active site involves His250. Residues Asp252 and Asn362 each contribute to the substrate site. Cys368 serves as the catalytic Nucleophile.

Belongs to the succinylarginine dihydrolase family. Homodimer.

It carries out the reaction N(2)-succinyl-L-arginine + 2 H2O + 2 H(+) = N(2)-succinyl-L-ornithine + 2 NH4(+) + CO2. It functions in the pathway amino-acid degradation; L-arginine degradation via AST pathway; L-glutamate and succinate from L-arginine: step 2/5. In terms of biological role, catalyzes the hydrolysis of N(2)-succinylarginine into N(2)-succinylornithine, ammonia and CO(2). The sequence is that of N-succinylarginine dihydrolase from Shewanella putrefaciens (strain CN-32 / ATCC BAA-453).